The chain runs to 2136 residues: U5 small nuclear ribonucleoprotein 200 kDa helicase (2136 aa).

A phosphoserine mark is found at S17 and S26. K46 participates in a covalent cross-link: Glycyl lysine isopeptide (Lys-Gly) (interchain with G-Cter in SUMO2). The segment at 50 to 80 (TRMGDKAQRTKPQMQEERRAKRRKRDEDRHD) is disordered. Positions 54 to 84 (DKAQRTKPQMQEERRAKRRKRDEDRHDINKM) form a coiled coil. S225 is subject to Phosphoserine. The residue at position 389 (T389) is a Phosphothreonine. Positions 395 to 2129 (DLDQGGEALA…YKFSVDVKEA (1735 aa)) are interaction with C9orf78 and WBP4. A Helicase ATP-binding 1 domain is found at 490–673 (RAALETDENL…FLRVDPAKGL (184 aa)). 503 to 510 (APTGAGKT) is an ATP binding site. Residues 615 to 618 (DEIH) carry the DEIH box motif. The 238-residue stretch at 684–921 (PLEQTYVGIT…NAKDAVNWLG (238 aa)) folds into the Helicase C-terminal 1 domain. A Phosphotyrosine modification is found at Y709. K971 carries the post-translational modification N6-acetyllysine. One can recognise an SEC63 1 domain in the interval 981–1286 (VTELGRIASH…SCETQLPVSF (306 aa)). An interaction with TSSC4 region spans residues 1282-2136 (LPVSFRHLIL…KEAETDSDSD (855 aa)). The Helicase ATP-binding 2 domain occupies 1337–1512 (NTVYNSDDNV…WLGCSATSTF (176 aa)). 1350–1357 (APTGSGKT) contacts ATP. At T1428 the chain carries Phosphothreonine. The DEVH box motif lies at 1454–1457 (DEVH). One can recognise a Helicase C-terminal 2 domain in the interval 1545-1753 (PVYHAITKHS…TIENKQDAVD (209 aa)). T1765 carries the phosphothreonine modification. Positions 1812-2124 (PLNLGMIAAY…GCDQEYKFSV (313 aa)) constitute an SEC63 2 domain. Position 2002 is a phosphoserine (S2002). T2131 carries the post-translational modification Phosphothreonine. S2133 and S2135 each carry phosphoserine.

Belongs to the helicase family. SKI2 subfamily. Component of a core complex containing at least PRPF8, SNRNP200, EFTUD2 and SNRNP40. Component of the U5 snRNP and U4/U6-U5 tri-snRNP complexes, building blocks of the spliceosome. Component of the U4/U6-U5 tri-snRNP complex composed of the U4, U6 and U5 snRNAs and at least PRPF3, PRPF4, PRPF6, PRPF8, PRPF31, SNRNP200, TXNL4A, SNRNP40, DDX23, CD2BP2, PPIH, SNU13, EFTUD2, SART1 and USP39. Component of precatalytic, catalytic and postcatalytic spliceosomal complexes. Component of the minor spliceosome, which splices U12-type introns. Interacts with C9orf78; the interaction is direct and mutually exclusive with its interaction with WBP4. Interacts with WBP4; the interaction is mutually exclusive with its interaction with C9orf78. Interacts with PRPF8. Interacts with TSSC4; the interaction is direct, excludes recruitment of C9ORF78 and WBP4 to SNRNP200 and negatively regulates its RNA helicase activity. In terms of tissue distribution, widely expressed.

Its subcellular location is the nucleus. The enzyme catalyses ATP + H2O = ADP + phosphate + H(+). In terms of biological role, catalyzes the ATP-dependent unwinding of U4/U6 RNA duplices, an essential step in the assembly of a catalytically active spliceosome. Plays a role in pre-mRNA splicing as a core component of precatalytic, catalytic and postcatalytic spliceosomal complexes. As a component of the minor spliceosome, involved in the splicing of U12-type introns in pre-mRNAs. Involved in spliceosome assembly, activation and disassembly. Mediates changes in the dynamic network of RNA-RNA interactions in the spliceosome. The sequence is that of U5 small nuclear ribonucleoprotein 200 kDa helicase (SNRNP200) from Homo sapiens (Human).